Here is a 282-residue protein sequence, read N- to C-terminus: Aquaporin PIP2-7 (282 aa).

The segment at 1–21 is disordered; that stretch reads MSKEVSVEGEQPPVKDYTDPP. The Cytoplasmic segment spans residues 1-38; the sequence is MSKEVSVEGEQPPVKDYTDPPPEPLLNFGELRLWSFYR. A helical membrane pass occupies residues 39-59; sequence ALIAEFVATLLFLYVTIATVI. Topologically, residues 60–71 are extracellular; it reads GHKEQNAADQCS. Residues 72–92 traverse the membrane as a helical segment; sequence GVGLLGIAWAFGGMIFILVYC. The Cytoplasmic segment spans residues 93–120; it reads TAGISGGHINPAVTLGLFLARKVSLIRA. Positions 102–104 match the NPA 1 motif; it reads NPA. Residues 121 to 141 form a helical membrane-spanning segment; the sequence is LLYMVAQCLGAIVGVGIVKGI. At 142-162 the chain is on the extracellular side; that stretch reads MKHQYNSLGGGANVVAAGYSK. Residues 163 to 183 form a helical membrane-spanning segment; the sequence is GTALGAEIIGTFVLVYTVFSA. Residues 184–196 are Cytoplasmic-facing; sequence TDPKRSARDSHVP. A helical transmembrane segment spans residues 197–217; it reads VLAPLPIGFAVFMVHLATIPI. Topologically, residues 218 to 244 are extracellular; sequence TGTGINPARSLGAAVIYNQDKPWDDHW. The NPA 2 signature appears at 223–225; sequence NPA. The chain crosses the membrane as a helical span at residues 245-265; sequence ILWVGPFVGALAAAAYHQYIL. Topologically, residues 266–282 are cytoplasmic; the sequence is RAAAIKALGSFRSNPSN.

Belongs to the MIP/aquaporin (TC 1.A.8) family. PIP (TC 1.A.8.11) subfamily. In terms of tissue distribution, expressed in roots, leaves and fruits.

It is found in the cell membrane. Its function is as follows. Water channel required to facilitate the transport of water across cell membrane; mercury-insensitive. Contributes to the tolerance to multiple abiotic stresses including salt (NaCl), cold and water deprivation, by modulating cytosolic K(+)/Na(+) ratio, maintaining osmotic balance, and reducing membrane injury (e.g. oxidative injury). Also regulates the expression of abscisic acid (ABA)- biosynthetic and -responsive genes during dehydration and salt stresses. The polypeptide is Aquaporin PIP2-7 (Musa acuminata (Banana)).